The following is a 158-amino-acid chain: MTHFPRHRYLLSQRAYEHRVLEEAAEILEQRYVRGETFARTENTTEYLRCKLAGYEHEIFAVLFLDNQHRLIEFKELFRGTVDAASVYPREVLKEALNVNAAAVIFAHNHPSGDPEPSQADRRITQRLKDALSLVDIRVLDHVVVGKSSVSFAERGWL.

The 122-residue stretch at 37-158 folds into the MPN domain; sequence TFARTENTTE…SVSFAERGWL (122 aa). Positions 108, 110, and 121 each coordinate Zn(2+). The JAMM motif signature appears at 108 to 121; the sequence is HNHPSGDPEPSQAD.

It belongs to the UPF0758 family.

This chain is UPF0758 protein VC_1786, found in Vibrio cholerae serotype O1 (strain ATCC 39315 / El Tor Inaba N16961).